We begin with the raw amino-acid sequence, 222 residues long: Cytidylate kinase (222 aa).

ATP is bound at residue 12 to 20; that stretch reads GPSGAGKGT.

The protein belongs to the cytidylate kinase family. Type 1 subfamily.

The protein resides in the cytoplasm. The catalysed reaction is CMP + ATP = CDP + ADP. The enzyme catalyses dCMP + ATP = dCDP + ADP. This Methylococcus capsulatus (strain ATCC 33009 / NCIMB 11132 / Bath) protein is Cytidylate kinase.